The following is a 121-amino-acid chain: MRHRVKTKSFHRKKEQREALFINLAKSLILNGKVETTLPKAKALRSFVEKLVTLAKEDTIHSKRLVAQRLKDQKVAKKLYTEIAPLFKERNGGYTRIYKLENRRIGDGGEKALIEFVEYPS.

The protein belongs to the bacterial ribosomal protein bL17 family. As to quaternary structure, part of the 50S ribosomal subunit. Contacts protein L32.

The polypeptide is Large ribosomal subunit protein bL17 (Sulfurihydrogenibium sp. (strain YO3AOP1)).